We begin with the raw amino-acid sequence, 29 residues long: Small toxic protein TisB (29 aa).

Residues 6–28 (IAILILKLIVAALQLLDAVLKYL) traverse the membrane as a helical segment.

The protein resides in the cell inner membrane. Toxic component of a type I toxin-antitoxin (TA) system. Overexpression causes cessation of growth, induces stress-response, a number of membrane protein genes, and leads to cell death. Inhibits ATP synthesis, ATP levels drop drastically quickly after induction. Part of the programmed response to DNA damage; damage leads to increased accumulation of the protein which slows or stops bacterial growth, probably allowing DNA repair before cells continue to grow. This chain is Small toxic protein TisB (tisB), found in Escherichia coli (strain K12).